The following is a 1029-amino-acid chain: MAYYSRPASAGAARAQDDQDPYPYYPDPDLIVGSGANTSFVNPYEASGAASSASHTSPFSDAHAASASPASILPLSHQQVSAHAPQQQHMSISVDPRDGQQSRMPGLSESFYSQAAYALASPPPAAGALSPSAHLATLPEHSQAPLSGSVDGEYTYYSQSAAGHYSSLAHRHGQDDEDDDDAETKYSPSSAHDEKYAYDRPDSAAAGTSPFGRAAGIAYLQSPYAQVARNDDDDEDEDAEDPYRVLTRDSAFGGDNGQGYDPNSAYGGAGMAGPTGQFGDNHFDTQHFGPAPARGAQLRRHKTKKNVRLTKGNLILDCPVPTKLQTFLTRRAEDEFTTMRYSAVTCDPDDFASESFTLRPALYGRHTELFIAITMYNEDEVLFCRTFHGVMKNIAHLCSRNKSRTWGKDGWKKVVVAIISDGRKKIHPRVLDCLAALGVYQDGVAKNMVDGKEVRAHLYEYTTQLSIDSNLQFKGAERGLVPMQIIFCLKEKNAKKINSHRWFFNAFCPILQPNVTILLDVGTRPENKSIYYLWKSFDLNSNVAGACGEICAETKGKWGVGPLLLNPLVAAQNFEYKISNILDKTTESVMGYISVLPGAFSAYRYIALQNDEFGHGPLASYFKGENLLGADADVFTSNMYLAEDRILCFELAAKRGHGWVLKYVKSARGVTDVPEGLPEFISQRRRWLNGSFFAAVYALYHTAQFVRSGHNVWRKSLLVFESFYSFVNMCFAWFGLANYYIFFRILTTSLEDPTFKLRGIGVFNVFMQYIYLGTVVSSFIFAMGNRPQGSKWKYWAAVVVFALLTVYMMVAAVLCLSKVVARVEHDAIYAQMVVSLLATYGVYLISSLLACDPLHLITSFLQYLLLAPTYINILNIYAFCNLHDFSWGTKGDTSISADLGAVVSTSKGTVEITLPTAQADIDTAYDDALNNLRTRPMIIRGDASNAEKEARQMDYYKNIRTNVVLAWALSNGVLAAFILNGDAAGTFSDTGGVTRTKVYMVLVLIFVAGMACIRFIGSTLYLTIRLING.

The disordered stretch occupies residues 1 to 29; that stretch reads MAYYSRPASAGAARAQDDQDPYPYYPDPD. Asn37 carries N-linked (GlcNAc...) asparagine glycosylation. Low complexity predominate over residues 46–71; sequence ASGAASSASHTSPFSDAHAASASPAS. Disordered stretches follow at residues 46-105 and 168-209; these read ASGA…SRMP and LAHR…AGTS. The span at 76–91 shows a compositional bias: polar residues; the sequence is SHQQVSAHAPQQQHMS. The span at 191-202 shows a compositional bias: basic and acidic residues; it reads AHDEKYAYDRPD. N-linked (GlcNAc...) asparagine glycans are attached at residues Asn401, Asn514, Asn527, and Asn689. The next 7 helical transmembrane spans lie at 723 to 743, 760 to 780, 796 to 816, 830 to 850, 860 to 880, 963 to 983, and 998 to 1018; these read FYSFVNMCFAWFGLANYYIFF, IGVFNVFMQYIYLGTVVSSFI, AAVVVFALLTVYMMVAAVLCL, AQMVVSLLATYGVYLISSLLA, FLQYLLLAPTYINILNIYAFC, VVLAWALSNGVLAAFILNGDA, and VYMVLVLIFVAGMACIRFIGS.

Belongs to the chitin synthase family. Class I subfamily.

It is found in the cell membrane. The protein localises to the cytoplasmic vesicle membrane. It catalyses the reaction [(1-&gt;4)-N-acetyl-beta-D-glucosaminyl](n) + UDP-N-acetyl-alpha-D-glucosamine = [(1-&gt;4)-N-acetyl-beta-D-glucosaminyl](n+1) + UDP + H(+). Its function is as follows. Polymerizes chitin, a structural polymer of the cell wall and septum, by transferring the sugar moiety of UDP-GlcNAc to the non-reducing end of the growing chitin polymer. The sequence is that of Chitin synthase 3 from Mycosarcoma maydis (Corn smut fungus).